The chain runs to 338 residues: 1-aminocyclopropane-1-carboxylate deaminase (338 aa).

Lys51 is modified (N6-(pyridoxal phosphate)lysine). Ser78 acts as the Nucleophile in catalysis.

The protein belongs to the ACC deaminase/D-cysteine desulfhydrase family. In terms of assembly, homotrimer. The cofactor is pyridoxal 5'-phosphate.

The catalysed reaction is 1-aminocyclopropane-1-carboxylate + H2O = 2-oxobutanoate + NH4(+). Its function is as follows. Catalyzes a cyclopropane ring-opening reaction, the irreversible conversion of 1-aminocyclopropane-1-carboxylate (ACC) to ammonia and alpha-ketobutyrate. Allows growth on ACC as a nitrogen source. The polypeptide is 1-aminocyclopropane-1-carboxylate deaminase (Burkholderia ambifaria (strain ATCC BAA-244 / DSM 16087 / CCUG 44356 / LMG 19182 / AMMD) (Burkholderia cepacia (strain AMMD))).